Here is a 557-residue protein sequence, read N- to C-terminus: Acetylcholine receptor subunit alpha-L1 (557 aa).

Residues Met-1–Ala-23 form the signal peptide. Over Asn-24–Phe-244 the chain is Extracellular. A glycan (N-linked (GlcNAc...) asparagine) is linked at Asn-47. Intrachain disulfides connect Cys-151/Cys-165 and Cys-224/Cys-225. N-linked (GlcNAc...) asparagine glycosylation occurs at Asn-235. A run of 3 helical transmembrane segments spans residues Tyr-245 to Leu-266, Ile-274 to Ile-294, and Tyr-308 to Val-329. Topologically, residues His-330–Gly-500 are cytoplasmic. A helical membrane pass occupies residues Phe-501 to Phe-523.

It belongs to the ligand-gated ion channel (TC 1.A.9) family. Acetylcholine receptor (TC 1.A.9.1) subfamily.

It is found in the postsynaptic cell membrane. It localises to the cell membrane. In terms of biological role, after binding acetylcholine, the AChR responds by an extensive change in conformation that affects all subunits and leads to opening of an ion-conducting channel across the plasma membrane. The protein is Acetylcholine receptor subunit alpha-L1 of Schistocerca gregaria (Desert locust).